Consider the following 274-residue polypeptide: Cytochrome b-c1 complex subunit Rieske, mitochondrial (274 aa).

The Mitochondrial matrix portion of the chain corresponds to 79 to 103 (SHTDVKVPDFSEYRRLEVLDSTKSS). Residues 104–140 (RESSEARKGFSYLVTGVTTVGVAYAAKNAVTQFVSSM) traverse the membrane as a helical segment. The Mitochondrial intermembrane segment spans residues 141-274 (SASADVLALA…FTSDDMVIVG (134 aa)). The Rieske domain maps to 187 to 272 (EAAVELSQLR…YEFTSDDMVI (86 aa)). Residues Cys217, His219, Cys236, His239, and Ser241 each coordinate [2Fe-2S] cluster. Cys222 and Cys238 form a disulfide bridge.

It belongs to the Rieske iron-sulfur protein family. In terms of assembly, component of the ubiquinol-cytochrome c oxidoreductase (cytochrome b-c1 complex, complex III, CIII), a multisubunit enzyme composed of 11 subunits. The complex is composed of 3 respiratory subunits cytochrome b, cytochrome c1 and Rieske protein UQCRFS1, 2 core protein subunits UQCRC1/QCR1 and UQCRC2/QCR2, and 6 low-molecular weight protein subunits UQCRH/QCR6, UQCRB/QCR7, UQCRQ/QCR8, UQCR10/QCR9, UQCR11/QCR10 and subunit 9, the cleavage product of Rieske protein UQCRFS1. The complex exists as an obligatory dimer and forms supercomplexes (SCs) in the inner mitochondrial membrane with NADH-ubiquinone oxidoreductase (complex I, CI) and cytochrome c oxidase (complex IV, CIV), resulting in different assemblies (supercomplex SCI(1)III(2)IV(1) and megacomplex MCI(2)III(2)IV(2)). Incorporation of the Rieske protein UQCRFS1 is the penultimate step in complex III assembly. Interacts with TTC19, which is involved in the clearance of UQCRFS1 fragments. Component of the ubiquinol-cytochrome c oxidoreductase (cytochrome b-c1 complex, complex III, CIII). Subunit 9 corresponds to the mitochondrial targeting sequence (MTS) of Rieske protein UQCRFS1. It is retained after processing and incorporated inside complex III, where it remains bound to the complex and localizes between the 2 core subunits UQCRC1/QCR1 and UQCRC2/QCR2. [2Fe-2S] cluster is required as a cofactor. Proteolytic processing is necessary for the correct insertion of UQCRFS1 in the complex III dimer. Several fragments are generated during UQCRFS1 insertion, most probably due to the endogenous matrix-processing peptidase (MPP) activity of the 2 core protein subunits UQCRC1/QCR1 and UQCRC2/QCR2, which are homologous to the 2 mitochondrial-processing peptidase (MPP) subunits beta-MPP and alpha-MPP respectively. The action of the protease is also necessary for the clearance of the UQCRFS1 fragments.

It localises to the mitochondrion inner membrane. The catalysed reaction is a quinol + 2 Fe(III)-[cytochrome c](out) = a quinone + 2 Fe(II)-[cytochrome c](out) + 2 H(+)(out). Its function is as follows. Component of the ubiquinol-cytochrome c oxidoreductase, a multisubunit transmembrane complex that is part of the mitochondrial electron transport chain which drives oxidative phosphorylation. The respiratory chain contains 3 multisubunit complexes succinate dehydrogenase (complex II, CII), ubiquinol-cytochrome c oxidoreductase (cytochrome b-c1 complex, complex III, CIII) and cytochrome c oxidase (complex IV, CIV), that cooperate to transfer electrons derived from NADH and succinate to molecular oxygen, creating an electrochemical gradient over the inner membrane that drives transmembrane transport and the ATP synthase. The cytochrome b-c1 complex catalyzes electron transfer from ubiquinol to cytochrome c, linking this redox reaction to translocation of protons across the mitochondrial inner membrane, with protons being carried across the membrane as hydrogens on the quinol. In the process called Q cycle, 2 protons are consumed from the matrix, 4 protons are released into the intermembrane space and 2 electrons are passed to cytochrome c. The Rieske protein is a catalytic core subunit containing a [2Fe-2S] iron-sulfur cluster. It cycles between 2 conformational states during catalysis to transfer electrons from the quinol bound in the Q(0) site in cytochrome b to cytochrome c1. Incorporation of UQCRFS1 is the penultimate step in complex III assembly. In terms of biological role, component of the ubiquinol-cytochrome c oxidoreductase (cytochrome b-c1 complex, complex III, CIII). UQCRFS1 undergoes proteolytic processing once it is incorporated in the complex III dimer. One of the fragments, called subunit 9, corresponds to its mitochondrial targeting sequence (MTS). The proteolytic processing is necessary for the correct insertion of UQCRFS1 in the complex III dimer, but the persistence of UQCRFS1-derived fragments may prevent newly imported UQCRFS1 to be processed and assembled into complex III and is detrimental for the complex III structure and function. The polypeptide is Cytochrome b-c1 complex subunit Rieske, mitochondrial (UQCRFS1) (Pan paniscus (Pygmy chimpanzee)).